An 88-amino-acid polypeptide reads, in one-letter code: Small ribosomal subunit protein bS20 (88 aa).

The tract at residues 1–23 (MANSPQAKKRARQNDKARAHNAS) is disordered.

The protein belongs to the bacterial ribosomal protein bS20 family.

Its function is as follows. Binds directly to 16S ribosomal RNA. The sequence is that of Small ribosomal subunit protein bS20 from Saccharophagus degradans (strain 2-40 / ATCC 43961 / DSM 17024).